The sequence spans 557 residues: Hepatocyte nuclear factor 1-beta (557 aa).

Positions Met1–Glu31 are dimerization. One can recognise an HNF-p1 domain in the interval Met1–Glu32. Phosphoserine occurs at positions 49, 52, 75, and 80. Residues Thr64–Asp85 are disordered. The POU-specific atypical domain maps to Lys93–Gln188. A DNA-binding region (homeobox; HNF1-type) is located at residues Met231–Gln311. A disordered region spans residues His324–Tyr352. Residues Pro328–Pro344 show a composition bias toward low complexity.

This sequence belongs to the HNF1 homeobox family. As to quaternary structure, binds DNA as a dimer. Can form homodimer or heterodimer with HNF1-alpha. Interacts (via HNF-p1 domain) with PCBD1; the interaction increases its transactivation activity.

The protein resides in the nucleus. In terms of biological role, transcription factor that binds to the inverted palindrome 5'-GTTAATNATTAAC-3'. Binds to the FPC element in the cAMP regulatory unit of the PLAU gene. Transcriptional activity is increased by coactivator PCBD1. In Homo sapiens (Human), this protein is Hepatocyte nuclear factor 1-beta (HNF1B).